A 1227-amino-acid polypeptide reads, in one-letter code: MPPLIESVVLQPLIAPIDPGADGRRSRRIERRSFARIKDAIDLPLLIETQLKSFEWFKREGLRELFDEISPITDFTGKNLELHFRDYTFGEPRYDEFECRERDLTYAAPLRVRVELRILTTGEIKESEIFLGDFPIMTDNGTFVYNGAERVVVSQLIRSPGVYFKDEKEPTSGRSLHTAKLIPNRGAWLEFETNKRDVISVKVDRKRKIPVTILLRAITAWIAEENGNGRWVPDNELDKFGHNDQIIELFRHVDTVPEHPYIHATLDKDPSRNAKEALLELYKRLRPGDPPTLENARSLIESLLFSPRRYDLAKVGRYKLNKNLWERDVRRDGAKAPDLSVRVLLPRDIFRIVEQLILLNNGHGRPDDIDHLGNRRVRTVGELIQQQFRVGLLRLERVVKERMSLQDPASATPNGLINIRPVVAAMREFFGGSQLSQFMDQTNPLAELTNKRRLSALGPGGLSRDRAGFEVRDVHHSHYGRICPVETPEGPNIGLIGTMSTFARVNEMGFLETPYRKVYNSVDNVQVWKEKGILLRDVRDLRTGDLIAAKGTRVNDEIARQITIGLLRGQILREDIVDPDTDELIAEAGTEINRALAERIVELPIKHIKIRPVVSQEVDYLSADEEDRFVIVQANAPLDQHNRFLDTIVSCRFGEDFVSERVERVDYMDVSPKQVVSVSTSLIPFLEHDDANRALMGSNMQRQAVPLLRPDAPIVGTGMEYRAARDSGQVIVARRDGVVVSTTSERIVIEEDDGNQTEYRLRKFMRSNQDTCINQRPAVVRGQRVKAGDVIADSSSTDQGELALGQNVLVAYMPWEGGNFEDAILVSERLVREDIFTSIHIEKYEVEARDTKLGPEEITRDIPNVGQESLRNLDERGIIYIGAEVQPNDILVGKITPKGETDLTAEERLLRAIFGEKAREVKDSSLRVPNGVRGKVIDVKVFSRSEGAELPVGVNQTVRVLLCQKRKISAGDKMAGRHGNKGVVSRVLPIEDMPFLPDGRPVDIILNPIGVPSRMNIGQILETHLGWAAARLGFRVATPVFDGAHEDQIKDLLVQAGLPADGKVTLYDGRTGERFDNPVTVGYAYMLKLAHLVEDKIHARSTGPYSLVTQQPLGGKAQFGGQRFGEMEVWALEAYGAAYTLQEMLTVKSDDVVGRVKTYEAIVKGEPIQEAGVPESFKVLIKELQSLGLSVEVLSADEKPVELSDDLDSDIGALEGINLSGMERGEF.

Belongs to the RNA polymerase beta chain family. The RNAP catalytic core consists of 2 alpha, 1 beta, 1 beta' and 1 omega subunit. When a sigma factor is associated with the core the holoenzyme is formed, which can initiate transcription.

The catalysed reaction is RNA(n) + a ribonucleoside 5'-triphosphate = RNA(n+1) + diphosphate. Functionally, DNA-dependent RNA polymerase catalyzes the transcription of DNA into RNA using the four ribonucleoside triphosphates as substrates. The chain is DNA-directed RNA polymerase subunit beta from Chloroflexus aurantiacus (strain ATCC 29366 / DSM 635 / J-10-fl).